A 138-amino-acid polypeptide reads, in one-letter code: uncharacterized protein (138 aa).

This is an uncharacterized protein from Acanthamoeba polyphaga mimivirus (APMV).